The primary structure comprises 276 residues: Elongation factor Ts, mitochondrial (276 aa).

The protein belongs to the EF-Ts family.

Its subcellular location is the mitochondrion. Functionally, associates with the EF-Tu.GDP complex and induces the exchange of GDP to GTP. It remains bound to the aminoacyl-tRNA.EF-Tu.GTP complex up to the GTP hydrolysis stage on the ribosome. The protein is Elongation factor Ts, mitochondrial of Leishmania braziliensis.